A 134-amino-acid polypeptide reads, in one-letter code: Small ribosomal subunit protein uS8 (134 aa).

The protein belongs to the universal ribosomal protein uS8 family. Part of the 30S ribosomal subunit. Contacts proteins S5 and S12.

Functionally, one of the primary rRNA binding proteins, it binds directly to 16S rRNA central domain where it helps coordinate assembly of the platform of the 30S subunit. The protein is Small ribosomal subunit protein uS8 of Thermotoga sp. (strain RQ2).